Here is a 392-residue protein sequence, read N- to C-terminus: Galactokinase (392 aa).

Residue 37-40 (EHTD) participates in substrate binding. ATP is bound by residues S71 and 128–134 (GAGLSSS). Positions 134 and 166 each coordinate Mg(2+). Catalysis depends on D178, which acts as the Proton acceptor. Y228 serves as a coordination point for substrate.

The protein belongs to the GHMP kinase family. GalK subfamily.

It is found in the cytoplasm. The enzyme catalyses alpha-D-galactose + ATP = alpha-D-galactose 1-phosphate + ADP + H(+). It functions in the pathway carbohydrate metabolism; galactose metabolism. Catalyzes the transfer of the gamma-phosphate of ATP to D-galactose to form alpha-D-galactose-1-phosphate (Gal-1-P). In Streptococcus pneumoniae serotype 4 (strain ATCC BAA-334 / TIGR4), this protein is Galactokinase.